The primary structure comprises 271 residues: Phosphate import ATP-binding protein PstB (271 aa).

Positions 24–266 (MIGNDVSVYY…PDDQRTQDYI (243 aa)) constitute an ABC transporter domain. Residue 56-63 (GPSGCGKS) coordinates ATP.

The protein belongs to the ABC transporter superfamily. Phosphate importer (TC 3.A.1.7) family. In terms of assembly, the complex is composed of two ATP-binding proteins (PstB), two transmembrane proteins (PstC and PstA) and a solute-binding protein (PstS).

It localises to the cell inner membrane. The enzyme catalyses phosphate(out) + ATP + H2O = ADP + 2 phosphate(in) + H(+). Its function is as follows. Part of the ABC transporter complex PstSACB involved in phosphate import. Responsible for energy coupling to the transport system. This is Phosphate import ATP-binding protein PstB from Rhizobium meliloti (strain 1021) (Ensifer meliloti).